The sequence spans 190 residues: MSKIYIDERSNAEIVCEAIKTIGIEGATAAQLTRQLNMEKREVNKALYDLQRSAMVYSSDDIPPRWFMTTEADKPDADAMADVIIDDVSREKSMREDHKSFDDVIPAKKIIDWKGANPVTVINEYCQITRRDWSFRIESVGPSNSPTFYACVDIDGRVFDKADGKSKRDAKNNAAKLAVDKLLGYVIIRF.

Residues 5-70 (YIDERSNAEI…DIPPRWFMTT (66 aa)) enclose the Z-binding domain. Residues 117–184 (NPVTVINEYC…AKLAVDKLLG (68 aa)) form the DRBM domain.

The protein belongs to the orthopoxvirus OPG065 family. As to quaternary structure, interacts with host G1P2/ISG15. Interacts with host EIF2AK2/PKR. Interacts with host ZBP1.

RNA-binding protein that plays a role in the inhibition of multiple cellular antiviral responses activated by double-stranded RNA (dsRNA), such as inhibition of PKR activation, necroptosis, and IFN-mediated antiviral activities. Recognizes and binds Z-RNA structures via its Z-binding domain and dsRNA via its DRBM domain: RNA-binding activity is required to escape host ZBP1-dependent necroptosis. Mechanistically, the Z-binding domain binds Z-RNAs that are produced during vaccinia virus infection, thereby competing with Z-RNA detection by host ZBP1, suppressing ZBP1-dependent necroptosis. Acts as a key inhibitor of the interferon response by blocking the phosphorylation and subsequent activation of IRF3 and IRF7 kinases that are required for interferon-alpha gene expression. Inhibits NF-kappa-B activation and the ubiquitin-like protein ISG15, which is an early antiviral protein. The binding with host ISG15 subsequently blocks host ISGylation. The protein is RNA-binding protein OPG065 (OPG065) of Vaccinia virus (strain Western Reserve) (VACV).